We begin with the raw amino-acid sequence, 324 residues long: MVFSKISQVAHYTPKQVISNDDLSQIMDTSHEWISSRTGIEKRHISTVEMTSDLAIRVAEQLLAGSGYDATALDFIIVATISPDASMPSTAAKVQAAIGATNAFAFDMTAACSGFVFALAMADKLIASGAYQRGLVIGAETLSKIIDWQDRSTAVLFGDGAGGVLLEASEQQHFLAEALHTDGARGQSLTSGQSSLRSPFSQGQEVNSFLQMDGRAIFDFAIRDVSRSITAIIEQSGLAKEELDYLLLHQANRRILDKMAKKIGMPREKFLENMMHYGNTSAASIPILLSESVQNGQLKLDGSQHILLSGFGGGLTWGSLIVKI.

Residues cysteine 112 and histidine 249 contribute to the active site. Positions 250–254 (QANRR) are ACP-binding. Asparagine 279 is a catalytic residue.

Belongs to the thiolase-like superfamily. FabH family. As to quaternary structure, homodimer.

The protein localises to the cytoplasm. The enzyme catalyses malonyl-[ACP] + acetyl-CoA + H(+) = 3-oxobutanoyl-[ACP] + CO2 + CoA. The protein operates within lipid metabolism; fatty acid biosynthesis. Its function is as follows. Catalyzes the condensation reaction of fatty acid synthesis by the addition to an acyl acceptor of two carbons from malonyl-ACP. Catalyzes the first condensation reaction which initiates fatty acid synthesis and may therefore play a role in governing the total rate of fatty acid production. Possesses both acetoacetyl-ACP synthase and acetyl transacylase activities. Its substrate specificity determines the biosynthesis of branched-chain and/or straight-chain of fatty acids. This is Beta-ketoacyl-[acyl-carrier-protein] synthase III from Streptococcus equi subsp. zooepidemicus (strain H70).